Reading from the N-terminus, the 267-residue chain is GTP cyclohydrolase FolE2 (267 aa).

It belongs to the GTP cyclohydrolase IV family.

It catalyses the reaction GTP + H2O = 7,8-dihydroneopterin 3'-triphosphate + formate + H(+). Its pathway is cofactor biosynthesis; 7,8-dihydroneopterin triphosphate biosynthesis; 7,8-dihydroneopterin triphosphate from GTP: step 1/1. Functionally, converts GTP to 7,8-dihydroneopterin triphosphate. The polypeptide is GTP cyclohydrolase FolE2 (Citrifermentans bemidjiense (strain ATCC BAA-1014 / DSM 16622 / JCM 12645 / Bem) (Geobacter bemidjiensis)).